The chain runs to 156 residues: Small ribosomal subunit protein uS7 (156 aa).

The protein belongs to the universal ribosomal protein uS7 family. As to quaternary structure, part of the 30S ribosomal subunit. Contacts proteins S9 and S11.

Its function is as follows. One of the primary rRNA binding proteins, it binds directly to 16S rRNA where it nucleates assembly of the head domain of the 30S subunit. Is located at the subunit interface close to the decoding center, probably blocks exit of the E-site tRNA. This chain is Small ribosomal subunit protein uS7, found in Bradyrhizobium diazoefficiens (strain JCM 10833 / BCRC 13528 / IAM 13628 / NBRC 14792 / USDA 110).